A 674-amino-acid chain; its full sequence is Enzymatic polyprotein (674 aa).

Positions 40–130 (IELHCFVDTG…CQLYEPFIQF (91 aa)) are protease. Asp47 is a catalytic residue. The region spanning 267–447 (LKVIKPSKSP…KKINFLGLEI (181 aa)) is the Reverse transcriptase domain.

It belongs to the caulimoviridae enzymatic polyprotein family.

The catalysed reaction is DNA(n) + a 2'-deoxyribonucleoside 5'-triphosphate = DNA(n+1) + diphosphate. Functionally, encodes for at least two polypeptides: protease (PR) and reverse transcriptase (RT). The protease processes the polyprotein in cis. Reverse transcriptase is multifunctional enzyme that converts the viral RNA genome into dsDNA in viral cytoplasmic capsids. This enzyme displays a DNA polymerase activity that can copy either DNA or RNA templates, and a ribonuclease H (RNase H) activity that cleaves the RNA strand of RNA-DNA heteroduplexes in a partially processive 3'- to 5'-endonucleasic mode. Neo-synthesized pregenomic RNA (pgRNA) are encapsidated, and reverse-transcribed inside the nucleocapsid. Partial (+)DNA is synthesized from the (-)DNA template and generates the relaxed circular DNA (RC-DNA) genome. After budding and infection, the RC-DNA migrates in the nucleus, and is converted into a plasmid-like covalently closed circular DNA (cccDNA). In Arabidopsis thaliana (Mouse-ear cress), this protein is Enzymatic polyprotein.